The following is a 317-amino-acid chain: Ribosomal RNA large subunit methyltransferase F (317 aa).

The protein belongs to the methyltransferase superfamily. METTL16/RlmF family.

It localises to the cytoplasm. The catalysed reaction is adenosine(1618) in 23S rRNA + S-adenosyl-L-methionine = N(6)-methyladenosine(1618) in 23S rRNA + S-adenosyl-L-homocysteine + H(+). In terms of biological role, specifically methylates the adenine in position 1618 of 23S rRNA. This Pseudomonas putida (strain ATCC 700007 / DSM 6899 / JCM 31910 / BCRC 17059 / LMG 24140 / F1) protein is Ribosomal RNA large subunit methyltransferase F.